The chain runs to 387 residues: Cysteine desulfurase (387 aa).

Pyridoxal 5'-phosphate-binding positions include 72–73 (GT), N152, Q180, and 200–202 (SAH). N6-(pyridoxal phosphate)lysine is present on K203. T238 contacts pyridoxal 5'-phosphate. C326 functions as the Cysteine persulfide intermediate in the catalytic mechanism. Position 326 (C326) interacts with [2Fe-2S] cluster.

The protein belongs to the class-V pyridoxal-phosphate-dependent aminotransferase family. NifS/IscS subfamily. Homodimer. The cofactor is pyridoxal 5'-phosphate.

It carries out the reaction (sulfur carrier)-H + L-cysteine = (sulfur carrier)-SH + L-alanine. Its function is as follows. Catalyzes the removal of elemental sulfur atoms from cysteine to produce alanine. Seems to participate in the biosynthesis of the nitrogenase metalloclusters by providing the inorganic sulfur required for the Fe-S core formation. This chain is Cysteine desulfurase, found in Sinorhizobium fredii (strain NBRC 101917 / NGR234).